The following is a 93-amino-acid chain: Large ribosomal subunit protein bL27 (93 aa).

A propeptide spanning residues 1–8 (MIMDLQFF) is cleaved from the precursor. Positions 8–29 (FSHHKGGGSTANGRNSAGRRLG) are disordered.

This sequence belongs to the bacterial ribosomal protein bL27 family. In terms of processing, the N-terminus is cleaved by ribosomal processing cysteine protease Prp.

The sequence is that of Large ribosomal subunit protein bL27 from Limosilactobacillus reuteri (strain DSM 20016) (Lactobacillus reuteri).